Reading from the N-terminus, the 413-residue chain is Eukaryotic initiation factor 4A-10 (413 aa).

The Q motif motif lies at 40–68 (DSFDAMGLQENLLRGIYAYGFEKPSAIQQ). The Helicase ATP-binding domain maps to 71-241 (IVPFCKGLDV…RKFMNKPVRI (171 aa)). An ATP-binding site is contributed by 84 to 91 (AQSGTGKT). The DEAD box signature appears at 189-192 (DEAD). The 162-residue stretch at 252-413 (GIKQFYVNVD…ELPANVADLL (162 aa)) folds into the Helicase C-terminal domain.

This sequence belongs to the DEAD box helicase family. eIF4A subfamily. As to quaternary structure, eIF4F is a multi-subunit complex, the composition of which varies with external and internal environmental conditions. It is composed of at least EIF4A, EIF4E and EIF4G.

The enzyme catalyses ATP + H2O = ADP + phosphate + H(+). Its function is as follows. ATP-dependent RNA helicase which is a subunit of the eIF4F complex involved in cap recognition and is required for mRNA binding to ribosome. In the current model of translation initiation, eIF4A unwinds RNA secondary structures in the 5'-UTR of mRNAs which is necessary to allow efficient binding of the small ribosomal subunit, and subsequent scanning for the initiator codon. The polypeptide is Eukaryotic initiation factor 4A-10 (Nicotiana tabacum (Common tobacco)).